Here is a 592-residue protein sequence, read N- to C-terminus: MACSKMSVDLECCICLEEDIERVDTIPCQHTVCRPCYLKPMINKCPVCRVRWIARERDPLAKDYTGEHYAHTYGFFAVNIDEESEEEEEEQVIEEEPQTPEIDPEEIELPRRFVDERIEYFLATGLRIDYVLTRGYCPSIQADEQEVLYLPLYTIYCNAYDANDDILHGQEIEITIQITRGECGSGWCEAQFVYVSITDSEDSGPKPITHSVKGGIGAVRFSREEIEFELQTPLPIESRTSYSHFEWEITTPYFKINQTGEELYPWAVLDFYEEEFWEPIVEPLDGPVDVDMSSYSAIGGIASMLRVTAAARRDNDEQYNEIIGRHVSRKVLNGGAEKDYIYLREINGKEFSIYDKIGNCFVGTNKTGITLPFTHVPSPAAIRGNHHILKEPEYIYGEERDTSYETALQSFDDWELIKREELLQRRYKREEQNLKYTSNRLFYFEKEFEEIMEDKWAIESYMCEDDDNTKPEYTTDMRVACEQRDRHGTDIVKCRLDKEVGSRRMHTLIDGESGVGKSFLAGHLSRGLVFDLDWITPNEDGSKPELPEDLHYPIIILGKRFDYDMREITKRLLYKKEYVVVKLSYMYFFYCI.

The segment at cysteine 12 to arginine 49 adopts an RING-type zinc-finger fold. Residues tryptophan 414–leucine 441 are a coiled coil.

This Ostreid herpesvirus 1 (isolate France) (OsHV-1) protein is Putative RING finger protein ORF9.